A 338-amino-acid chain; its full sequence is Lipoate-protein ligase A (338 aa).

In terms of domain architecture, BPL/LPL catalytic spans 29–216 (PATQRVLFLW…AFFAHYGERV (188 aa)). ATP is bound by residues Arg-71, 76–79 (GAVF), and Lys-134. Position 134 (Lys-134) interacts with (R)-lipoate.

The protein belongs to the LplA family. Monomer.

Its subcellular location is the cytoplasm. It catalyses the reaction L-lysyl-[lipoyl-carrier protein] + (R)-lipoate + ATP = N(6)-[(R)-lipoyl]-L-lysyl-[lipoyl-carrier protein] + AMP + diphosphate + H(+). Its pathway is protein modification; protein lipoylation via exogenous pathway; protein N(6)-(lipoyl)lysine from lipoate: step 1/2. It functions in the pathway protein modification; protein lipoylation via exogenous pathway; protein N(6)-(lipoyl)lysine from lipoate: step 2/2. In terms of biological role, catalyzes both the ATP-dependent activation of exogenously supplied lipoate to lipoyl-AMP and the transfer of the activated lipoyl onto the lipoyl domains of lipoate-dependent enzymes. The sequence is that of Lipoate-protein ligase A from Shigella boydii serotype 18 (strain CDC 3083-94 / BS512).